The chain runs to 286 residues: ATP-binding protein ChvD (286 aa).

Positions 21–85 (KLQDMIDSQN…DLLLLDEPTN (65 aa)) constitute an ABC transporter domain.

This sequence belongs to the ABC transporter superfamily.

In terms of biological role, the induction of virG by growth under acidic conditions and by phosphate starvation, in the absence of plant inducers, is influenced by ChvD. This is ATP-binding protein ChvD (chvD) from Rhizobium radiobacter (Agrobacterium tumefaciens).